The chain runs to 311 residues: tRNA dimethylallyltransferase (311 aa).

Position 9–16 (9–16 (GPTAVGKT)) interacts with ATP. 11–16 (TAVGKT) lines the substrate pocket. The interval 34 to 37 (DSMQ) is interaction with substrate tRNA.

The protein belongs to the IPP transferase family. As to quaternary structure, monomer. The cofactor is Mg(2+).

The catalysed reaction is adenosine(37) in tRNA + dimethylallyl diphosphate = N(6)-dimethylallyladenosine(37) in tRNA + diphosphate. Functionally, catalyzes the transfer of a dimethylallyl group onto the adenine at position 37 in tRNAs that read codons beginning with uridine, leading to the formation of N6-(dimethylallyl)adenosine (i(6)A). The polypeptide is tRNA dimethylallyltransferase (Clostridium botulinum (strain Langeland / NCTC 10281 / Type F)).